The chain runs to 452 residues: MTAVSSNRNPEDDGCLLEQEPRGRRLSPRTGTPRTTAVSSNRDPKNDGCLLKQEPRGRRLSPRTGAPGTTAVSSNRNPEDDGCLLKQEPRGRRLSPQTGTPRTTAVSSNRNPGDDGCLLKQGPRGRRLSPQTGTPGTTAVSSNRNPEDDGCLLKQEPRGRRLSPQTGTPGTTAVSSNRDHEDDGCLLKQESRGRRLSPQTGTPGTTAVSSNRNPEDDGCLLKQESRGRRLSPQTGTPGTTAVSSNRDPEDDGCLLKQGPRGRRLSPQTGTPRTTAVSSNRNPEDDGCLLKQGPRGRRLSPQTGIPRTTAVSSNRDPGEDGCLLKQESRGRRLSPQTGTTRTTAVSSKRNPEDDGCLLKQEPRGRRLSSLTGAPGTTAVSSNRDPRTTAVSSNRNPGDDGCLLKQGPRGRRLSPQTGTPGTTAVSSNRDPEDDGCLLKQEPQELRKPEADTAL.

Residues 1–452 (MTAVSSNRNP…LRKPEADTAL (452 aa)) are disordered. 4 stretches are compositionally biased toward polar residues: residues 29-41 (RTGT…VSSN), 95-111 (SPQT…SNRN), 129-144 (SPQT…SSNR), and 163-176 (SPQT…AVSS). Positions 177–193 (NRDHEDDGCLLKQESRG) are enriched in basic and acidic residues. 7 stretches are compositionally biased toward polar residues: residues 197–212 (SPQT…SSNR), 231–245 (SPQT…VSSN), 265–280 (SPQT…SSNR), 299–314 (SPQT…SSNR), 333–347 (SPQT…VSSK), 376–394 (TAVS…SNRN), and 412–426 (SPQT…VSSN). Positions 439 to 452 (EPQELRKPEADTAL) are enriched in basic and acidic residues.

This is an uncharacterized protein from Homo sapiens (Human).